We begin with the raw amino-acid sequence, 568 residues long: DEAD-box ATP-dependent RNA helicase 51 (568 aa).

Basic and acidic residues-rich tracts occupy residues 1–13 (MVESDKSSVEELK) and 23–47 (KKNEQQKAEEKTHTVEENADETQKK). The tract at residues 1-70 (MVESDKSSVE…EEEEKVEAME (70 aa)) is disordered. Residues 13 to 78 (KKRVRKRSRG…MEDGEDEKNI (66 aa)) adopt a coiled-coil conformation. A compositionally biased stretch (acidic residues) spans 60 to 70 (EEEEEKVEAME). The Q motif signature appears at 89–117 (VTFDSLDLSEQTSIAIKEMGFQYMTQIQA). Positions 120–295 (IQPLLEGKDV…RVSLTSPVHV (176 aa)) constitute a Helicase ATP-binding domain. 133 to 140 (ARTGSGKT) is an ATP binding site. Residues 243–246 (DEAD) carry the DEAD box motif. The region spanning 321–468 (RLILLISFLK…ELEFNEKRLS (148 aa)) is the Helicase C-terminal domain. The disordered stretch occupies residues 540 to 568 (KVRKARKQQGRNGFSPYSPYGKSTPTKEA).

Belongs to the DEAD box helicase family. DDX18/HAS1 subfamily.

It catalyses the reaction ATP + H2O = ADP + phosphate + H(+). The protein is DEAD-box ATP-dependent RNA helicase 51 (RH51) of Arabidopsis thaliana (Mouse-ear cress).